Consider the following 1482-residue polypeptide: Chromosome partition protein MukB (1482 aa).

34 to 41 (GGNGAGKS) provides a ligand contact to ATP. Coiled-coil stretches lie at residues 326 to 472 (LEAD…QTAH), 507 to 602 (NQRH…RRAP), 780 to 805 (RAAR…ATLS), 832 to 1110 (DDPE…REQV), and 1209 to 1265 (VEAI…LQSV). The interval 666 to 783 (PGGSEDPRLN…SLPLFGRAAR (118 aa)) is flexible hinge.

It belongs to the SMC family. MukB subfamily. As to quaternary structure, homodimerization via its hinge domain. Binds to DNA via its C-terminal region. Interacts, and probably forms a ternary complex, with MukE and MukF via its C-terminal region. The complex formation is stimulated by calcium or magnesium. Interacts with tubulin-related protein FtsZ.

Its subcellular location is the cytoplasm. It is found in the nucleoid. Its function is as follows. Plays a central role in chromosome condensation, segregation and cell cycle progression. Functions as a homodimer, which is essential for chromosome partition. Involved in negative DNA supercoiling in vivo, and by this means organize and compact chromosomes. May achieve or facilitate chromosome segregation by condensation DNA from both sides of a centrally located replisome during cell division. This chain is Chromosome partition protein MukB, found in Klebsiella pneumoniae subsp. pneumoniae (strain ATCC 700721 / MGH 78578).